The chain runs to 173 residues: Cytochrome c-type biogenesis protein CcmE (173 aa).

The Cytoplasmic segment spans residues 1-8 (MNPRRKSR). The chain crosses the membrane as a helical; Signal-anchor for type II membrane protein span at residues 9–29 (FKLVIFVVLGIAIASGLMLYA). Topologically, residues 30–173 (LRQNIDLFYT…RDRQEKEGAK (144 aa)) are periplasmic. Heme contacts are provided by H131 and Y135. Residues 152-173 (GIEAADLKGESARDRQEKEGAK) form a disordered region. A compositionally biased stretch (basic and acidic residues) spans 156–173 (ADLKGESARDRQEKEGAK).

Belongs to the CcmE/CycJ family.

Its subcellular location is the cell inner membrane. Its function is as follows. Heme chaperone required for the biogenesis of c-type cytochromes. Transiently binds heme delivered by CcmC and transfers the heme to apo-cytochromes in a process facilitated by CcmF and CcmH. In Haemophilus influenzae (strain ATCC 51907 / DSM 11121 / KW20 / Rd), this protein is Cytochrome c-type biogenesis protein CcmE.